Consider the following 318-residue polypeptide: Potassium channel subfamily K member 15 (318 aa).

Over 1-8 the chain is Cytoplasmic; the sequence is MRKQSART. The chain crosses the membrane as a helical span at residues 9 to 29; it reads AALILCILSYLLVGAAVFDAL. Positions 80 to 101 form an intramembrane region, pore-forming; sequence FAGSFYFAITVITTIGYGHAAP. Residues 108–128 traverse the membrane as a helical segment; sequence VFCMFYALLGIPLTLVTFQSL. Over 129-158 the chain is Cytoplasmic; sequence GERLNALVRCLLLAAKRCLGLRRPHVSAEN. A helical transmembrane segment spans residues 159–179; sequence MVVAGLLLCAATLALGAAAFA. Residues 189-209 constitute an intramembrane region (pore-forming); that stretch reads AYYYCFITLTTIGFGDFVALQ. The helical transmembrane segment at 223 to 243 threads the bilayer; that stretch reads FSFLYILLGLTVIGAFLNLVV. Residues 244 to 318 lie on the Cytoplasmic side of the membrane; the sequence is LRFLASAEAP…DRLRARRKSI (75 aa). Residues 296–318 are disordered; the sequence is LSPEAVHDCHSSPDRLRARRKSI. Residues 300–311 show a composition bias toward basic and acidic residues; it reads AVHDCHSSPDRL.

It belongs to the two pore domain potassium channel (TC 1.A.1.8) family. Heterodimer. Post-translationally, phosphorylated. As to expression, brain-specific. Highly expressed in auditory nuclei, in Purkinje cells and in olfactory bulb mitral cells.

Its subcellular location is the membrane. Probable potassium channel subunit. No channel activity observed in heterologous systems. May need to associate with another protein to form a functional channel. The polypeptide is Potassium channel subfamily K member 15 (Kcnk15) (Rattus norvegicus (Rat)).